The chain runs to 605 residues: ABC transporter E family member 2 (605 aa).

The 4Fe-4S ferredoxin-type domain occupies 46–75 (KLAFISEELCIGCGICVKKCPFEAIQIINL). ABC transporter domains follow at residues 70–315 (IQII…FLAG) and 344–568 (IQSY…LSHL). ATP contacts are provided by residues 110-117 (GTNGIGKS) and 381-388 (GENGTGKT).

It belongs to the ABC transporter superfamily. ABCE family. Expressed in roots, stems, leaves, flowers and siliques.

The protein localises to the membrane. The sequence is that of ABC transporter E family member 2 (ABCE2) from Arabidopsis thaliana (Mouse-ear cress).